Consider the following 209-residue polypeptide: Uracil phosphoribosyltransferase (209 aa).

5-phospho-alpha-D-ribose 1-diphosphate is bound by residues R79, R104, and 131-139; that span reads DPMLATGNS. Uracil contacts are provided by residues I194 and 199–201; that span reads GDA. D200 contributes to the 5-phospho-alpha-D-ribose 1-diphosphate binding site.

This sequence belongs to the UPRTase family. Mg(2+) is required as a cofactor.

It catalyses the reaction UMP + diphosphate = 5-phospho-alpha-D-ribose 1-diphosphate + uracil. It participates in pyrimidine metabolism; UMP biosynthesis via salvage pathway; UMP from uracil: step 1/1. With respect to regulation, allosterically activated by GTP. In terms of biological role, catalyzes the conversion of uracil and 5-phospho-alpha-D-ribose 1-diphosphate (PRPP) to UMP and diphosphate. In Rhizobium leguminosarum bv. trifolii (strain WSM2304), this protein is Uracil phosphoribosyltransferase.